A 229-amino-acid polypeptide reads, in one-letter code: 3-dehydroquinate dehydratase (229 aa).

Residues Glu33–Arg35 and Arg65 contribute to the 3-dehydroquinate site. The active-site Proton donor/acceptor is the His121. Lys146 (schiff-base intermediate with substrate) is an active-site residue. Arg188, Ser207, and Gln211 together coordinate 3-dehydroquinate.

This sequence belongs to the type-I 3-dehydroquinase family. Homodimer.

The catalysed reaction is 3-dehydroquinate = 3-dehydroshikimate + H2O. Its pathway is metabolic intermediate biosynthesis; chorismate biosynthesis; chorismate from D-erythrose 4-phosphate and phosphoenolpyruvate: step 3/7. Its function is as follows. Involved in the third step of the chorismate pathway, which leads to the biosynthesis of aromatic amino acids. Catalyzes the cis-dehydration of 3-dehydroquinate (DHQ) and introduces the first double bond of the aromatic ring to yield 3-dehydroshikimate. This chain is 3-dehydroquinate dehydratase, found in Lactococcus lactis subsp. cremoris (strain SK11).